The primary structure comprises 719 residues: Leucine-rich repeat and fibronectin type-III domain-containing protein 5 (719 aa).

Residues 1–17 (MEKILFYLFLIGIAVKA) form the signal peptide. One can recognise an LRRNT domain in the interval 18-51 (QICPKRCVCQILSPNLATLCAKKGLLFVPPNIDR). At 18 to 529 (QICPKRCVCQ…MQSQFLGGTM (512 aa)) the chain is on the extracellular side. LRR repeat units follow at residues 52 to 73 (RTVE…DFAN), 76 to 97 (SLVD…AFAD), 100 to 121 (NLRA…MFSG), 124 to 145 (NLHH…AFDD), 148 to 169 (ALEE…AVEK), 172 to 193 (SLHT…TFSH), and 196 to 217 (KMTR…PLFQ). Asparagine 73 carries N-linked (GlcNAc...) asparagine glycosylation. Positions 240–286 (NPLHCNCELLWLRRLSREDDLETCASPPLLTGRYFWSIPEEEFLCEP) constitute an LRRCT domain. The Ig-like domain maps to 287-373 (PLITRHTHEM…GEATQIVDLH (87 aa)). The cysteines at positions 308 and 357 are disulfide-linked. N-linked (GlcNAc...) asparagine glycosylation is found at asparagine 330, asparagine 339, asparagine 382, asparagine 406, and asparagine 452. Residues 385–414 (NHIHEPDPGSSDISTSTKSGSNTSSSNGDT) form a disordered region. The segment covering 393-414 (GSSDISTSTKSGSNTSSSNGDT) has biased composition (low complexity). The Fibronectin type-III domain occupies 414-503 (TKLSQDKIVV…ITSLTATRVV (90 aa)). A helical transmembrane segment spans residues 530–550 (IIIIGGIIVASVLVFIIILMI). Residues 551–719 (RYKVCNNNGQ…VQETQRLELI (169 aa)) are Cytoplasmic-facing. Low complexity predominate over residues 615–627 (ETCSSQDSSTTTS). Residues 615 to 694 (ETCSSQDSST…SVTEGPTSKR (80 aa)) are disordered. Composition is skewed to polar residues over residues 628–641 (ALPP…SVSQ) and 649–677 (TKPS…TALQ).

The protein belongs to the LRFN family. Can form heteromeric complexes with LRFN1, LRFN2, LRFN3 and LFRN4. Able to form homomeric complexes across cell junctions, between adjacent cells. Does not interact with DLG1, DLG2, DLG3 and DLG4.

Its subcellular location is the membrane. Its function is as follows. Cell adhesion molecule that mediates homophilic cell-cell adhesion in a Ca(2+)-independent manner. Promotes neurite outgrowth in hippocampal neurons. This Homo sapiens (Human) protein is Leucine-rich repeat and fibronectin type-III domain-containing protein 5 (LRFN5).